Reading from the N-terminus, the 954-residue chain is Lysine-specific demethylase JMJ14 (954 aa).

The interval 1–46 (MDQLASLAESVAMEEDSEKQSIKGESSLEPDSTPSSPKITARWNPS) is disordered. Over residues 29–38 (EPDSTPSSPK) the composition is skewed to polar residues. Positions 56-97 (APIFYPTNEDFDDPLGYIEKLRSKAESYGICRIVPPVAWRPP) constitute a JmjN domain. Positions 136–143 (RKRRRISK) match the Nuclear localization signal 1 motif. The segment at 148 to 170 (RRKRDSGCDTASSGSSDSEGKFG) is disordered. A JmjC domain is found at 263–429 (QYSQCGWNLN…HGQNAVEGYS (167 aa)). Positions 309, 311, and 397 each coordinate Fe cation. The Nuclear localization signal 2 signature appears at 470 to 477 (WKRVCSED). Zn(2+) contacts are provided by C519, C522, C533, C535, C542, H545, C550, and C552. Residues 519-571 (CFLCFYDLHMSASSCKCSPNRFACLIHAKDLCSCESKDRYILIRHTLDELWAL) form a C5HC2 zinc finger. The disordered stretch occupies residues 641-670 (SNKEVQLKQDGDSDVNRHGHESERNHVHGI). Over residues 645-670 (VQLKQDGDSDVNRHGHESERNHVHGI) the composition is skewed to basic and acidic residues. The FYR N-terminal domain occupies 726–784 (ATNRLSLSVELLSSGSLVVKKLWCSKQAIYPKGFKSRVKFLSVLDPTNLTNYISEVLDA). The FYR C-terminal domain occupies 786–876 (LLGPLFRVSV…HQLEEYWNQK (91 aa)). Residues 884–905 (EPIKEGEKDDTEKGGASDPSLD) are disordered. The span at 885–905 (PIKEGEKDDTEKGGASDPSLD) shows a compositional bias: basic and acidic residues.

The protein belongs to the JARID1 histone demethylase family. Interacts with NAC050 and NAC051/NAC052. Interacts with THAL in the nucleus. The cofactor is Fe(2+). Expressed in shoot apex, primary root tip, trichomes of young leaves, leaf vascular tissues, anther filaments and styles. Detected in inflorescences, leaves, stems, roots and siliques. Mostly expressed in floral organs, and, at low levels, in other organs.

Its subcellular location is the nucleus. It is found in the nucleoplasm. The enzyme catalyses N(6),N(6),N(6)-trimethyl-L-lysyl(4)-[histone H3] + 2-oxoglutarate + O2 = N(6),N(6)-dimethyl-L-lysyl(4)-[histone H3] + formaldehyde + succinate + CO2. The catalysed reaction is N(6),N(6)-dimethyl-L-lysyl(4)-[histone H3] + 2-oxoglutarate + O2 = N(6)-methyl-L-lysyl(4)-[histone H3] + formaldehyde + succinate + CO2. It carries out the reaction N(6)-methyl-L-lysyl(4)-[histone H3] + 2-oxoglutarate + O2 = L-lysyl(4)-[histone H3] + formaldehyde + succinate + CO2. It catalyses the reaction N(6),N(6),N(6)-trimethyl-L-lysyl(4)-[histone H3] + 3 2-oxoglutarate + 3 O2 = L-lysyl(4)-[histone H3] + 3 formaldehyde + 3 succinate + 3 CO2. Functionally, transcriptional repressor. Histone demethylase that demethylates 'Lys-4' (H3K4me) of histone H3 with a higher activity for H3K4me3 and H3K4me2 than H3K4me1. No activity on H3K9me3/2, H3K36me3/2 and H3K27me3/2. Function as a nocturne 'eraser' to counteract the diurnal 'writer' methylase activity of ATXR3/SDG2 thus orchestrating the circadian rhythm of histone modifications (e.g. H3K4me3) and modulating the rhythmic expression of diurnal target genes; this mechanism also relies on the circadian clock oscillators CCA1 and LHY. Involved in a negative regulation of root meristem growth upon suboptimal root growth conditions. Represses FT and TSF expression to inhibit the floral transition. Binds around the transcription start site of the FT locus. Involved in the DRM2-mediated maintenance of DNA methylation, but not required for the de novo DNA methylation. Required for demethylating histone H3K4me3 at the target of RNA silencing. Counteracts the DNA methylation of expressed transgenes; specific attenuation of transgene DNA methylation enhances the production of aberrant RNAs (e.g. uncapped and antisense) that readily induce systemic RDR6-dependent post-transcriptional transgene silencing (PTGS) spreading. Together with NAC051/NAC052 and NAC050, regulates gene expression and flowering time, probably by the promotion of RNA-mediated gene silencing. Together with JMJ16 and JMJ17, required for plant growth and development. Promotes local and systemic immunity (especially toward the bacterial pathogen Pseudomonas syringae Pst DC3000 avrRpt2) by regulating positively pathogen-induced H3K4me3 enrichment and expression of defense genes involved in salicylic acid (SA)- and pipecolic acid (Pip)-mediated defense pathways (e.g. PR1, FMO1, ALD1 and SARD4). This Arabidopsis thaliana (Mouse-ear cress) protein is Lysine-specific demethylase JMJ14.